A 298-amino-acid chain; its full sequence is GTPase Era (298 aa).

In terms of domain architecture, Era-type G spans 3 to 170 (KSGFVAILGR…VQLLKDNLEE (168 aa)). A G1 region spans residues 11-18 (GRPNVGKS). Position 11–18 (11–18 (GRPNVGKS)) interacts with GTP. Residues 37–41 (QSTRN) are G2. The interval 58-61 (DTPG) is G3. GTP-binding positions include 58–62 (DTPGI) and 120–123 (NKID). The tract at residues 120 to 123 (NKID) is G4. Residues 149 to 151 (ISA) form a G5 region. Residues 201 to 279 (TQQEVPHSVA…YLETWVKVKK (79 aa)) enclose the KH type-2 domain.

This sequence belongs to the TRAFAC class TrmE-Era-EngA-EngB-Septin-like GTPase superfamily. Era GTPase family. Monomer.

It localises to the cytoplasm. It is found in the cell membrane. Functionally, an essential GTPase that binds both GDP and GTP, with rapid nucleotide exchange. Plays a role in 16S rRNA processing and 30S ribosomal subunit biogenesis and possibly also in cell cycle regulation and energy metabolism. This is GTPase Era from Streptococcus equi subsp. zooepidemicus (strain H70).